We begin with the raw amino-acid sequence, 479 residues long: Glutamate--tRNA ligase (479 aa).

The 'HIGH' region signature appears at 21–31 (PSPTGYLHVGG). The short motif at 248-252 (KLSKR) is the 'KMSKS' region element. An ATP-binding site is contributed by lysine 251.

Belongs to the class-I aminoacyl-tRNA synthetase family. Glutamate--tRNA ligase type 1 subfamily. Monomer.

It localises to the cytoplasm. The enzyme catalyses tRNA(Glu) + L-glutamate + ATP = L-glutamyl-tRNA(Glu) + AMP + diphosphate. Functionally, catalyzes the attachment of glutamate to tRNA(Glu) in a two-step reaction: glutamate is first activated by ATP to form Glu-AMP and then transferred to the acceptor end of tRNA(Glu). This is Glutamate--tRNA ligase from Actinobacillus pleuropneumoniae serotype 7 (strain AP76).